Here is a 383-residue protein sequence, read N- to C-terminus: GTPase-interacting component 2 (383 aa).

Residues 63 to 106 are disordered; it reads SNKKNIELPPLSPNSHPSCHHRRSNSNSAKSKESSSSSSSANKT. The span at 87–105 shows a compositional bias: low complexity; sequence NSNSAKSKESSSSSSSANK. The CRIB domain maps to 134 to 147; sequence ISTPFDFQHISHAD. Polar residues predominate over residues 155 to 165; that stretch reads EQLQEPSSLST. A disordered region spans residues 155 to 189; that stretch reads EQLQEPSSLSTEIKDDYTSSSSKRDSKSLNKAFVT. Residues 166 to 182 show a composition bias toward basic and acidic residues; it reads EIKDDYTSSSSKRDSKS. Residues S254, S258, S337, S345, and S367 each carry the phosphoserine modification. The segment at 319-361 is disordered; that stretch reads ETPNSNKDSAKAFFPSRQSPLPKRRNSIATPSPQSKFSYSDSP. Residues 345-361 are compositionally biased toward polar residues; sequence SIATPSPQSKFSYSDSP.

The protein belongs to the BORG/CEP family. In terms of assembly, interacts with GTP-bound CDC42.

Its subcellular location is the bud neck. The protein resides in the bud tip. The protein localises to the cytoplasm. It localises to the cell cortex. It is found in the cytoskeleton. Functionally, required for cell size and shape control, bud site selection, bud emergence, actin cytoskeletal organization, mitotic spindle orientation/positioning, and mating projection formation in response to mating pheromone. This is GTPase-interacting component 2 (GIC2) from Saccharomyces cerevisiae (strain ATCC 204508 / S288c) (Baker's yeast).